Reading from the N-terminus, the 178-residue chain is Protein-export protein SecB (178 aa).

Residues 1–13 show a composition bias toward acidic residues; that stretch reads MADEGDVLTDLDM. Residues 1 to 25 are disordered; the sequence is MADEGDVLTDLDMDPAAGGNGADNR.

The protein belongs to the SecB family. As to quaternary structure, homotetramer, a dimer of dimers. One homotetramer interacts with 1 SecA dimer.

It localises to the cytoplasm. Its function is as follows. One of the proteins required for the normal export of preproteins out of the cell cytoplasm. It is a molecular chaperone that binds to a subset of precursor proteins, maintaining them in a translocation-competent state. It also specifically binds to its receptor SecA. In Erythrobacter litoralis (strain HTCC2594), this protein is Protein-export protein SecB.